Here is a 173-residue protein sequence, read N- to C-terminus: RNA polymerase sigma factor TcsR (173 aa).

Residues 122–169 (IKDLTQNEKNILRKIYLHGLRESEISRELNISRQAVNKTHLRALEKLK) are sigma-70 factor domain-4. A DNA-binding region (H-T-H motif) is located at residues 143–162 (ESEISRELNISRQAVNKTHL).

It belongs to the sigma-70 factor family.

In terms of biological role, sigma factors are initiation factors that promote the attachment of RNA polymerase to specific initiation sites and are then released. Transcriptional regulator specifically required to activate expression of the toxin gene locus, composed of tcsL and tcdE/utxA. The sequence is that of RNA polymerase sigma factor TcsR from Paraclostridium sordellii (Clostridium sordellii).